The following is a 132-amino-acid chain: CLAVATA3/ESR (CLE)-related protein TDIF (132 aa).

The N-terminal stretch at 1–26 (MDIDLLWSFGGWFFILFPETINYCMA) is a signal peptide. The chain crosses the membrane as a helical span at residues 42–62 (SCSSLFFVALLIITILITMLQ). The segment covering 68 to 77 (EVTSLPTHQP) has biased composition (polar residues). Residues 68–132 (EVTSLPTHQP…PSGPNPISNR (65 aa)) form a disordered region. Residues 87–96 (STSSTATTTT) show a composition bias toward low complexity. The segment covering 101–111 (KRTHHQSHPKP) has biased composition (basic residues). Hydroxyproline is present on residues Pro123 and Pro126. The O-linked (Ara...) hydroxyproline glycan is linked to Pro126.

The protein belongs to the CLV3/ESR signal peptide family. As to quaternary structure, interacts specifically with the leucine-rich repeat receptor-like protein kinase TDR. Post-translationally, the TDIFp peptide contains two hydroxprolines, but hydroxylation had no direct effect on TDIFp activity. In terms of processing, the O-glycosylation (arabinosylation) of the hydroxyproline Pro-126 enhances binding affinity of the TDIFp peptide for its receptor.

It localises to the secreted. The protein resides in the extracellular space. The protein localises to the cell membrane. Extracellular signal peptide that regulates cell fate. Represses tracheary element differentiation but promotes the formation of procambial cells adjacent to phloem cells in the veins. The sequence is that of CLAVATA3/ESR (CLE)-related protein TDIF from Zinnia elegans (Garden zinnia).